The chain runs to 195 residues: uncharacterized protein (195 aa).

Positions 1–17 are cleaved as a signal peptide; the sequence is MKASLITAFVLPLLALA. Asn-75 carries N-linked (GlcNAc...) asparagine glycosylation.

The protein resides in the secreted. This is an uncharacterized protein from Arthroderma benhamiae (strain ATCC MYA-4681 / CBS 112371) (Trichophyton mentagrophytes).